A 505-amino-acid polypeptide reads, in one-letter code: Aminoaldehyde dehydrogenase 2 (505 aa).

Residues Ile31 and Asp99 each contribute to the Na(+) site. NAD(+)-binding positions include 159-161 and 185-188; these read TPW and KPSE. Leu189 contacts Na(+). 238–242 contributes to the NAD(+) binding site; it reads GSGPT. The active-site Proton acceptor is Glu260. Leu261 is an NAD(+) binding site. Cys295 acts as the Nucleophile in catalysis. NAD(+)-binding residues include Glu394 and Trp460.

The protein belongs to the aldehyde dehydrogenase family. In terms of assembly, forms homodimers.

It carries out the reaction 4-aminobutanal + NAD(+) + H2O = 4-aminobutanoate + NADH + 2 H(+). It catalyses the reaction 3-aminopropanal + NAD(+) + H2O = beta-alanine + NADH + 2 H(+). The enzyme catalyses 4-(trimethylamino)butanal + NAD(+) + H2O = 4-(trimethylamino)butanoate + NADH + 2 H(+). The catalysed reaction is 4-guanidinobutanal + NAD(+) + H2O = 4-guanidinobutanoate + NADH + 2 H(+). It functions in the pathway amine and polyamine biosynthesis; betaine biosynthesis via choline pathway; betaine from betaine aldehyde: step 1/1. Its function is as follows. Dehydrogenase that catalyzes the oxidation of several aminoaldehydes. Metabolizes and detoxifies aldehyde products of polyamine degradation to non-toxic amino acids. Catalyzes the oxidation of 4-aminobutanal and 3-aminopropanal to 4-aminobutanoate and beta-alanine, respectively. Catalyzes the oxidation of 4-(trimethylamino)butanal and 4-guanidinobutanal to 4-trimethylammoniobutanoate and 4-guanidinobutanoate, respectively. This Solanum lycopersicum (Tomato) protein is Aminoaldehyde dehydrogenase 2.